The primary structure comprises 382 residues: Leucoanthocyanidin reductase (382 aa).

Residues 19 to 25 (GGTGFIG), Arg44, and Lys52 each bind NADP(+). Lys142 (proton acceptor) is an active-site residue. Position 146 (Arg146) interacts with NADP(+).

It belongs to the NmrA-type oxidoreductase family. Isoflavone reductase subfamily. Monomer.

It catalyses the reaction (2R,3S)-catechin + NADP(+) + H2O = (2R,3S,4S)-leucocyanidin + NADPH + H(+). It participates in flavonoid metabolism; proanthocyanidin biosynthesis. Catalyzes the synthesis of catechin from 3,4-cis-leucocyanidin. Also synthesizes afzelechin and gallocatechin. The chain is Leucoanthocyanidin reductase (LAR) from Desmodium uncinatum (Silverleaf Spanish clover).